The sequence spans 66 residues: MKIFFFIFAALFLLAQIFQARTAIHRALICKRMEGHCEAECLTFEAKIGGCRAELAPFCCKNRKKH.

The N-terminal stretch at 1–22 (MKIFFFIFAALFLLAQIFQART) is a signal peptide. 2 cysteine pairs are disulfide-bonded: C37–C51 and C41–C60.

This sequence belongs to the beta-defensin family.

Its subcellular location is the secreted. Its function is as follows. Has antibacterial activity. In Gorilla gorilla gorilla (Western lowland gorilla), this protein is Beta-defensin 107A (DEFB107A).